The primary structure comprises 265 residues: Apolipoprotein A-I (265 aa).

A signal peptide spans 1–18; sequence MKAVLLTLAVLFLTGSQA. A run of 2 repeats spans residues 67–88 and 89–110. The segment at 67-265 is 10 X approximate tandem repeats; that stretch reads LKLLDNWDSL…DEASKKLNAQ (199 aa). Position 109 is a methionine sulfoxide (M109). The 3; half-length repeat unit spans residues 111–121; the sequence is KDLEEVKQKVQ. Repeat copies occupy residues 122-142, 144-165, 166-187, 188-209, and 210-230. The stretch at 231-241 is one 9; half-length repeat; it reads PALEDLRQGLV. Repeat unit 10 spans residues 242 to 265; that stretch reads PVLESLKVSILAAIDEASKKLNAQ.

It belongs to the apolipoprotein A1/A4/E family. Homodimer. Interacts with APOA1BP and CLU. Component of a sperm activating protein complex (SPAP), consisting of APOA1, an immunoglobulin heavy chain, an immunoglobulin light chain and albumin. Interacts with NDRG1. Interacts with SCGB3A2. Interacts with NAXE and YJEFN3. Glycosylated. In terms of processing, palmitoylated. Post-translationally, phosphorylation sites are present in the extracellular medium. As to expression, major protein of plasma HDL, also found in chylomicrons.

The protein resides in the secreted. Its function is as follows. Participates in the reverse transport of cholesterol from tissues to the liver for excretion by promoting cholesterol efflux from tissues and by acting as a cofactor for the lecithin cholesterol acyltransferase (LCAT). As part of the SPAP complex, activates spermatozoa motility. The chain is Apolipoprotein A-I (APOA1) from Tursiops truncatus (Atlantic bottle-nosed dolphin).